The chain runs to 456 residues: Glycosyl hydrolase family 109 protein 2 (456 aa).

The segment at residues 1-33 (MSGFDRRSFLKASMVTAAATALAACASSERATG) is a signal peptide (tat-type signal). Residues 63 to 64 (ER), Asp85, 134 to 137 (WAWH), 154 to 155 (EV), and Asn183 each bind NAD(+). Substrate contacts are provided by residues Tyr212, Arg231, 243–246 (YPTH), and Tyr325. Residue Tyr243 participates in NAD(+) binding.

It belongs to the Gfo/Idh/MocA family. Glycosyl hydrolase 109 subfamily. NAD(+) is required as a cofactor. Post-translationally, predicted to be exported by the Tat system. The position of the signal peptide cleavage has not been experimentally proven.

Functionally, glycosidase. The chain is Glycosyl hydrolase family 109 protein 2 from Shewanella sp. (strain ANA-3).